The sequence spans 276 residues: Ribosomal RNA small subunit methyltransferase A (276 aa).

H15, L17, G42, E64, D89, and N108 together coordinate S-adenosyl-L-methionine.

It belongs to the class I-like SAM-binding methyltransferase superfamily. rRNA adenine N(6)-methyltransferase family. RsmA subfamily.

The protein resides in the cytoplasm. It catalyses the reaction adenosine(1518)/adenosine(1519) in 16S rRNA + 4 S-adenosyl-L-methionine = N(6)-dimethyladenosine(1518)/N(6)-dimethyladenosine(1519) in 16S rRNA + 4 S-adenosyl-L-homocysteine + 4 H(+). Its function is as follows. Specifically dimethylates two adjacent adenosines (A1518 and A1519) in the loop of a conserved hairpin near the 3'-end of 16S rRNA in the 30S particle. May play a critical role in biogenesis of 30S subunits. The chain is Ribosomal RNA small subunit methyltransferase A from Prochlorococcus marinus (strain MIT 9312).